Reading from the N-terminus, the 228-residue chain is Heptaprenylglyceryl phosphate synthase (228 aa).

A sn-glycerol 1-phosphate-binding site is contributed by Lys12. Asp14 and Thr40 together coordinate Mg(2+). Residues Tyr159–Gly164, Gly189, and Gly209–Asn210 each bind sn-glycerol 1-phosphate.

Belongs to the GGGP/HepGP synthase family. Group I subfamily. As to quaternary structure, homodimer. Mg(2+) serves as cofactor.

The catalysed reaction is sn-glycerol 1-phosphate + all-trans-heptaprenyl diphosphate = 3-heptaprenyl-sn-glycero-1-phosphate + diphosphate. Its pathway is membrane lipid metabolism; glycerophospholipid metabolism. In terms of biological role, prenyltransferase that catalyzes in vivo the transfer of the heptaprenyl moiety of heptaprenyl pyrophosphate (HepPP; 35 carbon atoms) to the C3 hydroxyl of sn-glycerol-1-phosphate (G1P), producing heptaprenylglyceryl phosphate (HepGP). This reaction is an ether-bond-formation step in the biosynthesis of archaea-type G1P-based membrane lipids found in Bacillales. This is Heptaprenylglyceryl phosphate synthase from Geobacillus sp. (strain WCH70).